The primary structure comprises 126 residues: uncharacterized protein (126 aa).

Residues 3 to 23 (NMIVLIIFAAFIIYMIASYVY) traverse the membrane as a helical segment. In terms of domain architecture, Rhodanese spans 39 to 123 (GYRKAQLIDV…GFKKWGGKIK (85 aa)).

Its subcellular location is the cell membrane. This is an uncharacterized protein from Bacillus subtilis (strain 168).